The following is a 464-amino-acid chain: tRNA-2-methylthio-N(6)-dimethylallyladenosine synthase (464 aa).

A disordered region spans residues 1–24 (MSDLVPLSRKPAPAAGGPAPSPAA). Positions 8–18 (SRKPAPAAGGP) are enriched in low complexity. The MTTase N-terminal domain maps to 27–142 (RKVYVHTFGC…LPEMVERARD (116 aa)). Positions 36, 72, 105, 180, 184, and 187 each coordinate [4Fe-4S] cluster. Residues 166–398 (ARGRVTAFVT…LAAQRRIAGE (233 aa)) form the Radical SAM core domain. The TRAM domain occupies 401–464 (AGELGKVVEV…GGSSLSGTLA (64 aa)).

The protein belongs to the methylthiotransferase family. MiaB subfamily. In terms of assembly, monomer. [4Fe-4S] cluster is required as a cofactor.

It is found in the cytoplasm. It carries out the reaction N(6)-dimethylallyladenosine(37) in tRNA + (sulfur carrier)-SH + AH2 + 2 S-adenosyl-L-methionine = 2-methylsulfanyl-N(6)-dimethylallyladenosine(37) in tRNA + (sulfur carrier)-H + 5'-deoxyadenosine + L-methionine + A + S-adenosyl-L-homocysteine + 2 H(+). Catalyzes the methylthiolation of N6-(dimethylallyl)adenosine (i(6)A), leading to the formation of 2-methylthio-N6-(dimethylallyl)adenosine (ms(2)i(6)A) at position 37 in tRNAs that read codons beginning with uridine. This Anaeromyxobacter sp. (strain K) protein is tRNA-2-methylthio-N(6)-dimethylallyladenosine synthase.